A 312-amino-acid chain; its full sequence is MKSPFWSWNGRIAELKETAKATGVDLEAEIRLLEERLARLRKETYENLTPWQRVQLARAPGRPTTLDVLEKAFQDFIELHGDRAFADDPAIVGGLAYLEGEKVVVVGHQKGRDTKENLQRNFGMPHPEGYRKAMRLMDLADRFGYPFLTFVDTPGAYPGVSAEERGQAWVIAQSIQRMSRLRVPAVTVILGEGGSGGALAIAVANRVLILENAWYSVISPESCAAILWRDAKEAPKAAEALKLTAKDLLQLKVVDAIVPEPEGGAHKDPDRAIRNIKEALLKALEELKGLSPEALYEDRYRRFRSLGAFAEP.

The region spanning 32 to 286 (LLEERLARLR…KEALLKALEE (255 aa)) is the CoA carboxyltransferase C-terminal domain.

Belongs to the AccA family. Acetyl-CoA carboxylase is a heterohexamer composed of biotin carboxyl carrier protein (AccB), biotin carboxylase (AccC) and two subunits each of ACCase subunit alpha (AccA) and ACCase subunit beta (AccD).

It is found in the cytoplasm. It carries out the reaction N(6)-carboxybiotinyl-L-lysyl-[protein] + acetyl-CoA = N(6)-biotinyl-L-lysyl-[protein] + malonyl-CoA. Its pathway is lipid metabolism; malonyl-CoA biosynthesis; malonyl-CoA from acetyl-CoA: step 1/1. Its function is as follows. Component of the acetyl coenzyme A carboxylase (ACC) complex. First, biotin carboxylase catalyzes the carboxylation of biotin on its carrier protein (BCCP) and then the CO(2) group is transferred by the carboxyltransferase to acetyl-CoA to form malonyl-CoA. This chain is Acetyl-coenzyme A carboxylase carboxyl transferase subunit alpha, found in Thermus thermophilus (strain ATCC BAA-163 / DSM 7039 / HB27).